A 297-amino-acid chain; its full sequence is Cell division protein FtsX (297 aa).

Topologically, residues 1–21 (MRFGFLLNEVLTGFRRNVTMT) are cytoplasmic. A helical transmembrane segment spans residues 22–42 (IAMILTTAISVGLFGGGMLVV). Residues 43–171 (RLADSSRAIY…LFAVLDGLSN (129 aa)) are Extracellular-facing. A helical membrane pass occupies residues 172–192 (AAFAVALVQAIGAILLIANMV). Residues 193–219 (QVAAYTRRTEIGIMRLVGASRWYTQLP) lie on the Cytoplasmic side of the membrane. A helical membrane pass occupies residues 220 to 240 (FLVEAMLAATMGVGIAVAGLM). Residues 241-267 (VVRALFLENALNQFYQANLIAKVDYAD) lie on the Extracellular side of the membrane. The chain crosses the membrane as a helical span at residues 268-288 (ILFITPWLLLLGVAMSGLTAY). At 289–297 (LTLRLYVRR) the chain is on the cytoplasmic side.

The protein belongs to the ABC-4 integral membrane protein family. FtsX subfamily. In terms of assembly, forms a membrane-associated complex with FtsE.

The protein localises to the cell membrane. Part of the ABC transporter FtsEX involved in cellular division. The sequence is that of Cell division protein FtsX from Mycobacterium tuberculosis (strain ATCC 25177 / H37Ra).